The chain runs to 337 residues: Tryptophan--tRNA ligase (337 aa).

Residues 12–14 (QPS) and 21–22 (GN) contribute to the ATP site. The 'HIGH' region signature appears at 13 to 22 (PSADSLHLGN). L-tryptophan is bound at residue Asp-138. ATP-binding positions include 150-152 (GDD), Ile-189, and 198-202 (KMSKS). A 'KMSKS' region motif is present at residues 198 to 202 (KMSKS).

This sequence belongs to the class-I aminoacyl-tRNA synthetase family. In terms of assembly, homodimer.

The protein resides in the cytoplasm. The catalysed reaction is tRNA(Trp) + L-tryptophan + ATP = L-tryptophyl-tRNA(Trp) + AMP + diphosphate + H(+). Its function is as follows. Catalyzes the attachment of tryptophan to tRNA(Trp). The polypeptide is Tryptophan--tRNA ligase (Leifsonia xyli subsp. xyli (strain CTCB07)).